A 277-amino-acid chain; its full sequence is Co-chaperone protein DjlA (277 aa).

Residues 1–6 (MRYWGK) lie on the Periplasmic side of the membrane. Residues 7–31 (LLGLVLGVMYAPGVVGALLGLLVGH) traverse the membrane as a helical segment. At 32-277 (MVDRALGAKR…DLIKREKGFK (246 aa)) the chain is on the cytoplasmic side. In terms of domain architecture, J spans 211-277 (DACKVLGVNS…DLIKREKGFK (67 aa)).

In terms of assembly, homodimer.

It is found in the cell inner membrane. Functionally, regulatory DnaK co-chaperone. Direct interaction between DnaK and DjlA is needed for the induction of the wcaABCDE operon, involved in the synthesis of a colanic acid polysaccharide capsule, possibly through activation of the RcsB/RcsC phosphotransfer signaling pathway. The colanic acid capsule may help the bacterium survive conditions outside the host. In Yersinia pseudotuberculosis serotype I (strain IP32953), this protein is Co-chaperone protein DjlA.